We begin with the raw amino-acid sequence, 429 residues long: Phosphomethylpyrimidine synthase (429 aa).

Residues Asn66, Met95, Tyr124, His163, 185–187, 226–229, and Glu265 contribute to the substrate site; these read SRG and DGLR. Residue His269 coordinates Zn(2+). Tyr292 provides a ligand contact to substrate. Zn(2+) is bound at residue His333. Cys409, Cys412, and Cys416 together coordinate [4Fe-4S] cluster.

It belongs to the ThiC family. [4Fe-4S] cluster is required as a cofactor.

The catalysed reaction is 5-amino-1-(5-phospho-beta-D-ribosyl)imidazole + S-adenosyl-L-methionine = 4-amino-2-methyl-5-(phosphooxymethyl)pyrimidine + CO + 5'-deoxyadenosine + formate + L-methionine + 3 H(+). Its pathway is cofactor biosynthesis; thiamine diphosphate biosynthesis. Catalyzes the synthesis of the hydroxymethylpyrimidine phosphate (HMP-P) moiety of thiamine from aminoimidazole ribotide (AIR) in a radical S-adenosyl-L-methionine (SAM)-dependent reaction. This is Phosphomethylpyrimidine synthase from Carboxydothermus hydrogenoformans (strain ATCC BAA-161 / DSM 6008 / Z-2901).